We begin with the raw amino-acid sequence, 517 residues long: GMP synthase [glutamine-hydrolyzing] (517 aa).

The region spanning 11–202 (KIIVLDFGSQ…AFKVCGAKAN (192 aa)) is the Glutamine amidotransferase type-1 domain. Residue Cys-88 is the Nucleophile of the active site. Active-site residues include His-176 and Glu-178. A GMPS ATP-PPase domain is found at 203-392 (WTMDDFIEMQ…LGIPHDLVWR (190 aa)). Residue 230 to 236 (SGGVDSS) participates in ATP binding.

As to quaternary structure, homodimer.

It catalyses the reaction XMP + L-glutamine + ATP + H2O = GMP + L-glutamate + AMP + diphosphate + 2 H(+). It participates in purine metabolism; GMP biosynthesis; GMP from XMP (L-Gln route): step 1/1. Its function is as follows. Catalyzes the synthesis of GMP from XMP. The polypeptide is GMP synthase [glutamine-hydrolyzing] (Lactobacillus johnsonii (strain CNCM I-12250 / La1 / NCC 533)).